Reading from the N-terminus, the 567-residue chain is Proline--tRNA ligase (567 aa).

The protein belongs to the class-II aminoacyl-tRNA synthetase family. ProS type 1 subfamily. In terms of assembly, homodimer.

It localises to the cytoplasm. It carries out the reaction tRNA(Pro) + L-proline + ATP = L-prolyl-tRNA(Pro) + AMP + diphosphate. Its function is as follows. Catalyzes the attachment of proline to tRNA(Pro) in a two-step reaction: proline is first activated by ATP to form Pro-AMP and then transferred to the acceptor end of tRNA(Pro). As ProRS can inadvertently accommodate and process non-cognate amino acids such as alanine and cysteine, to avoid such errors it has two additional distinct editing activities against alanine. One activity is designated as 'pretransfer' editing and involves the tRNA(Pro)-independent hydrolysis of activated Ala-AMP. The other activity is designated 'posttransfer' editing and involves deacylation of mischarged Ala-tRNA(Pro). The misacylated Cys-tRNA(Pro) is not edited by ProRS. The chain is Proline--tRNA ligase from Geobacillus kaustophilus (strain HTA426).